A 399-amino-acid polypeptide reads, in one-letter code: Elongation factor Tu (399 aa).

Positions Lys-10–Thr-209 constitute a tr-type G domain. The G1 stretch occupies residues Gly-19–Thr-26. A GTP-binding site is contributed by Gly-19–Thr-26. Thr-26 contributes to the Mg(2+) binding site. The segment at Gly-60–Ala-64 is G2. The segment at Asp-81–Gly-84 is G3. Residues Asp-81 to His-85 and Asn-136 to Asp-139 each bind GTP. A G4 region spans residues Asn-136–Asp-139. The segment at Ser-174 to Lys-176 is G5.

This sequence belongs to the TRAFAC class translation factor GTPase superfamily. Classic translation factor GTPase family. EF-Tu/EF-1A subfamily. Monomer.

The protein resides in the cytoplasm. The enzyme catalyses GTP + H2O = GDP + phosphate + H(+). GTP hydrolase that promotes the GTP-dependent binding of aminoacyl-tRNA to the A-site of ribosomes during protein biosynthesis. The polypeptide is Elongation factor Tu (Sulfurimonas denitrificans (strain ATCC 33889 / DSM 1251) (Thiomicrospira denitrificans (strain ATCC 33889 / DSM 1251))).